Reading from the N-terminus, the 87-residue chain is UPF0250 protein ETA_23570 (87 aa).

Belongs to the UPF0250 family.

In Erwinia tasmaniensis (strain DSM 17950 / CFBP 7177 / CIP 109463 / NCPPB 4357 / Et1/99), this protein is UPF0250 protein ETA_23570.